We begin with the raw amino-acid sequence, 508 residues long: MGLPWYRVHTVVLNDPGRLLSVHIMHTALVAGWAGSMALYELAVFDPSDPVLDPMWRQGMFVIPFMTRLGITNSWGGWNITGGTITNPGLWSYEGVAGAHIVFSGLCFLAAIWHWVYWDLEIFCDERTGKPSLDLPKIFGIHLFLSGVACFGFGAFHVTGLYGPGIWVSDPYGLTGKVQPVNPAWGVEGFDPFVPGGIASHHIAAGTLGILAGLFHLSVRPPQRLYKGLRMGNIETVLSSSIAAVFFAAFVVAGTMWYGSATTPIELFGPTRYQWDQGYFQQEIYRRVSAGLAENQSLSDAWSKIPEKLAFYDYIGNNPAKGGLFRAGSMDNGDGIAVGWLGHPVFRNKEGRELFVRRMPTFFETFPVVLVDGDGIVRADVPFRRAESKYSVEQVGVTVEFYGGELNGVSYSDPATVKKYARRAQLGEIFELDRATLKSDGVFRSSPRGWFTFGHASFALLFFFGHIWHGARTLFRDVFAGIDPDLDAQVEFGAFQKLGDPTTKRQAV.

A run of 6 helical transmembrane segments spans residues 21-36 (SVHI…WAGS), 101-115 (IVFS…IWHW), 140-156 (GIHL…FGAF), 203-218 (IAAG…FHLS), 237-252 (VLSS…AFVV), and 457-472 (SFAL…HGAR).

This sequence belongs to the PsbB/PsbC family. PsbB subfamily. In terms of assembly, PSII is composed of 1 copy each of membrane proteins PsbA, PsbB, PsbC, PsbD, PsbE, PsbF, PsbH, PsbI, PsbJ, PsbK, PsbL, PsbM, PsbT, PsbX, PsbY, PsbZ, Psb30/Ycf12, at least 3 peripheral proteins of the oxygen-evolving complex and a large number of cofactors. It forms dimeric complexes. Requires Binds multiple chlorophylls. PSII binds additional chlorophylls, carotenoids and specific lipids. as cofactor.

It is found in the plastid. Its subcellular location is the chloroplast thylakoid membrane. In terms of biological role, one of the components of the core complex of photosystem II (PSII). It binds chlorophyll and helps catalyze the primary light-induced photochemical processes of PSII. PSII is a light-driven water:plastoquinone oxidoreductase, using light energy to abstract electrons from H(2)O, generating O(2) and a proton gradient subsequently used for ATP formation. This chain is Photosystem II CP47 reaction center protein, found in Olimarabidopsis pumila (Dwarf rocket).